The chain runs to 325 residues: Cell division protein ZipA (325 aa).

Residues 1-5 (MQELR) lie on the Periplasmic side of the membrane. Residues 6-26 (LVLILVGALAIAALLFHGLWT) form a helical membrane-spanning segment. The Cytoplasmic segment spans residues 27–325 (SRKETSSKFG…KQRVKVFCRK (299 aa)).

This sequence belongs to the ZipA family. In terms of assembly, interacts with FtsZ via their C-terminal domains.

It localises to the cell inner membrane. Functionally, essential cell division protein that stabilizes the FtsZ protofilaments by cross-linking them and that serves as a cytoplasmic membrane anchor for the Z ring. Also required for the recruitment to the septal ring of downstream cell division proteins. The protein is Cell division protein ZipA of Aliivibrio fischeri (strain MJ11) (Vibrio fischeri).